Here is a 22-residue protein sequence, read N- to C-terminus: Chlorophyllase type 1 (22 aa).

It belongs to the AB hydrolase superfamily. Lipase family.

It catalyses the reaction a chlorophyll + H2O = a chlorophyllide + phytol + H(+). The protein operates within porphyrin-containing compound metabolism; chlorophyll degradation. In terms of biological role, catalyzes the hydrolysis of ester bond in chlorophyll to yield chlorophyllide and phytol. The polypeptide is Chlorophyllase type 1 (Chenopodium album (Fat hen)).